We begin with the raw amino-acid sequence, 87 residues long: Signal recognition particle 19 kDa protein (87 aa).

This sequence belongs to the SRP19 family. Part of the signal recognition particle protein translocation system, which is composed of SRP and FtsY. Archaeal SRP consists of a 7S RNA molecule of 300 nucleotides and two protein subunits: SRP54 and SRP19.

The protein localises to the cytoplasm. In terms of biological role, involved in targeting and insertion of nascent membrane proteins into the cytoplasmic membrane. Binds directly to 7S RNA and mediates binding of the 54 kDa subunit of the SRP. This chain is Signal recognition particle 19 kDa protein, found in Methanocaldococcus jannaschii (strain ATCC 43067 / DSM 2661 / JAL-1 / JCM 10045 / NBRC 100440) (Methanococcus jannaschii).